A 272-amino-acid chain; its full sequence is ATP synthase subunit a (272 aa).

5 consecutive transmembrane segments (helical) span residues 41–61 (TLNIDSMFFSVVLGLIFLALF), 102–122 (IAPLALTIFVWVFLMNLMDLV), 147–167 (DVNITLSMALGVFILILFYSI), 212–232 (LFGNMYAGELIFILIAGLLPW), and 243–263 (AIFHILIITLQAFIFMVLTIV).

It belongs to the ATPase A chain family. In terms of assembly, F-type ATPases have 2 components, CF(1) - the catalytic core - and CF(0) - the membrane proton channel. CF(1) has five subunits: alpha(3), beta(3), gamma(1), delta(1), epsilon(1). CF(0) has three main subunits: a(1), b(2) and c(9-12). The alpha and beta chains form an alternating ring which encloses part of the gamma chain. CF(1) is attached to CF(0) by a central stalk formed by the gamma and epsilon chains, while a peripheral stalk is formed by the delta and b chains.

It is found in the cell inner membrane. Functionally, key component of the proton channel; it plays a direct role in the translocation of protons across the membrane. This Edwardsiella ictaluri (strain 93-146) protein is ATP synthase subunit a.